Here is a 398-residue protein sequence, read N- to C-terminus: tRNA(Ile)-lysidine synthase (398 aa).

25 to 30 (SGGVDS) provides a ligand contact to ATP.

It belongs to the tRNA(Ile)-lysidine synthase family.

The protein localises to the cytoplasm. The catalysed reaction is cytidine(34) in tRNA(Ile2) + L-lysine + ATP = lysidine(34) in tRNA(Ile2) + AMP + diphosphate + H(+). Its function is as follows. Ligates lysine onto the cytidine present at position 34 of the AUA codon-specific tRNA(Ile) that contains the anticodon CAU, in an ATP-dependent manner. Cytidine is converted to lysidine, thus changing the amino acid specificity of the tRNA from methionine to isoleucine. This chain is tRNA(Ile)-lysidine synthase, found in Francisella tularensis subsp. holarctica (strain OSU18).